The primary structure comprises 385 residues: GDP-D-glucose phosphorylase 1 (385 aa).

The active-site Tele-GMP-histidine intermediate is histidine 218.

This sequence belongs to the GDPGP1 family.

It localises to the cytoplasm. It catalyses the reaction GDP-alpha-D-glucose + phosphate = alpha-D-glucose 1-phosphate + GDP + H(+). Functionally, specific and highly efficient GDP-D-glucose phosphorylase regulating the levels of GDP-D-glucose in cells. This is GDP-D-glucose phosphorylase 1 (GDPGP1) from Homo sapiens (Human).